The sequence spans 1003 residues: Phosphatidylinositol 4,5-bisphosphate 5-phosphatase A (1003 aa).

Disordered regions lie at residues 1–110 and 147–414; these read MEGQ…AAKS and AMPR…QPTC. The short motif at 6 to 11 is the RSXSXX motif 1 element; that stretch reads RSGSAR. Residues 11 to 24 are compositionally biased toward low complexity; sequence RPGTRTGLGPLPGT. Arginine 56 is modified (asymmetric dimethylarginine; alternate). An Omega-N-methylarginine; alternate modification is found at arginine 56. Arginine 65 carries the post-translational modification Omega-N-methylarginine. Arginine 76 carries the asymmetric dimethylarginine modification. Arginine 83 is subject to Asymmetric dimethylarginine; alternate. Arginine 83 bears the Omega-N-methylarginine; alternate mark. A compositionally biased stretch (polar residues) spans 160 to 174; sequence LTPTSRDQKQLSPTS. Serine 171 carries the post-translational modification Phosphoserine. Residues 180 to 196 show a composition bias toward low complexity; the sequence is ALATSGLSLALASQEQP. Positions 197-210 are enriched in pro residues; that stretch reads PQSPSSPSPVPSPV. Over residues 284–294 the composition is skewed to basic and acidic residues; sequence ARPEAPRHSPE. Serine 292 and serine 325 each carry phosphoserine. The segment covering 338–348 has biased composition (pro residues); the sequence is VPPPLPKPPRS. The SH3-binding motif lies at 346-351; that stretch reads PRSPSR. 2 stretches are compositionally biased toward low complexity: residues 349-361 and 390-413; these read PSRS…NRSP and QAQE…AQPT. The short motif at 351–356 is the RSXSXX motif 2 element; the sequence is RSPSRS. Residues 422–725 form a catalytic region; that stretch reads ITVVTWNVGT…SDHKPVAAQF (304 aa). Positions 726-837 are required for ruffle localization; the sequence is ILQFAFRDDV…IGVTEPFQIS (112 aa). The segment at 839-1003 is disordered; sequence PTSESASSST…LGLEEGGLGP (165 aa). Low complexity predominate over residues 840 to 855; the sequence is TSESASSSTDSSGTSS. 2 short sequence motifs (RSXSXX motif) span residues 871–876 and 882–887; these read RSPSPG and RSRSPG. Serine 900 bears the Phosphoserine mark. Composition is skewed to low complexity over residues 907–919 and 927–943; these read SRSP…QLPR and SSSS…GLPG. Residues 908 to 913 carry the RSXSXX motif 5 motif; that stretch reads RSPSPQ. Position 987 is a phosphoserine (serine 987).

Belongs to the inositol 1,4,5-trisphosphate 5-phosphatase type II family.

Its subcellular location is the cytoplasm. The catalysed reaction is 1D-myo-inositol 1,4,5-trisphosphate + H2O = 1D-myo-inositol 1,4-bisphosphate + phosphate. It carries out the reaction 1D-myo-inositol 1,3,4,5-tetrakisphosphate + H2O = 1D-myo-inositol 1,3,4-trisphosphate + phosphate. The enzyme catalyses a 1,2-diacyl-sn-glycero-3-phospho-(1D-myo-inositol-4,5-bisphosphate) + H2O = a 1,2-diacyl-sn-glycero-3-phospho-(1D-myo-inositol 4-phosphate) + phosphate. Functionally, inositol 5-phosphatase, which converts inositol 1,4,5-trisphosphate to inositol 1,4-bisphosphate. Also converts phosphatidylinositol 4,5-bisphosphate to phosphatidylinositol 4-phosphate and inositol 1,3,4,5-tetrakisphosphate to inositol 1,3,4-trisphosphate in vitro. May be involved in modulation of the function of inositol and phosphatidylinositol polyphosphate-binding proteins that are present at membranes ruffles. The chain is Phosphatidylinositol 4,5-bisphosphate 5-phosphatase A (Inpp5j) from Mus musculus (Mouse).